We begin with the raw amino-acid sequence, 165 residues long: Sec-independent protein translocase protein TatB (165 aa).

The helical transmembrane segment at 1–21 threads the bilayer; that stretch reads MFDVSFTELIVIGVVALIVLG. Residues 67-84 are compositionally biased toward polar residues; sequence DSTAQDVNQSLRSATDSL. Positions 67–165 are disordered; sequence DSTAQDVNQS…PKSPSTGNAT (99 aa). Positions 127–159 are enriched in low complexity; the sequence is KLPGTPATLPATAAAEPTPAAPAASQAEAPKSP.

Belongs to the TatB family. The Tat system comprises two distinct complexes: a TatABC complex, containing multiple copies of TatA, TatB and TatC subunits, and a separate TatA complex, containing only TatA subunits. Substrates initially bind to the TatABC complex, which probably triggers association of the separate TatA complex to form the active translocon.

It is found in the cell inner membrane. Functionally, part of the twin-arginine translocation (Tat) system that transports large folded proteins containing a characteristic twin-arginine motif in their signal peptide across membranes. Together with TatC, TatB is part of a receptor directly interacting with Tat signal peptides. TatB may form an oligomeric binding site that transiently accommodates folded Tat precursor proteins before their translocation. The protein is Sec-independent protein translocase protein TatB of Bordetella avium (strain 197N).